A 142-amino-acid chain; its full sequence is Large ribosomal subunit protein uL22c (142 aa).

Belongs to the universal ribosomal protein uL22 family. Part of the 50S ribosomal subunit.

Its subcellular location is the plastid. It localises to the chloroplast. Its function is as follows. This protein binds specifically to 23S rRNA. The globular domain of the protein is located near the polypeptide exit tunnel on the outside of the subunit, while an extended beta-hairpin is found that lines the wall of the exit tunnel in the center of the 70S ribosome. This Pinus thunbergii (Japanese black pine) protein is Large ribosomal subunit protein uL22c (rpl22).